Consider the following 327-residue polypeptide: Phage tubulin-like protein (327 aa).

Residues 14–15 and 107–109 each bind GTP; these read GA and ASG. A disordered region spans residues 303 to 327; that stretch reads KANMRKRQSTLDVDDQATSSGLVFD. Over residues 318–327 the composition is skewed to polar residues; sequence QATSSGLVFD.

The protein belongs to the FtsZ family. PhuZ subfamily. As to quaternary structure, homomultimer. Polymerizes in a strictly GTP-dependent manner.

The protein localises to the host cytoplasm. It catalyses the reaction GTP + H2O = GDP + phosphate + H(+). With respect to regulation, the non-hydrolyzable GTP analog GMPCPP stabilizes filaments, which never disassemble. In terms of biological role, a tubulin-like GTPase that forms filaments, which are required for positioning viral DNA and capsids in the middle of the host cell for optimal replication. The motor component of a partition system which pushes phage DNA (encased by protein gp105) to the center of the bacterial host cell. Also required for movement of phage capsids to the vicinity of the viral DNA and rotation of the encased viral DNA at midcell. Forms filaments during the lytic phase, which position phage DNA at the center of the bacterial host cell. Filaments have a three-stranded intertwined architecture and form a spindle-like cytoskeleton within the infected cell. Has GTPase activity. Filaments grow at the plus end and depolymerize at the minus end, a process called treadmilling, and switch from growing in a polar manner to catastrophic depolymerization, i.e. they display dynamic instability, like tubulin. In infected host cells the filament ends close to the cell pole are relatively stable, while the other end near the phage DNA is highly dynamic. Both capsid movement and DNA rotation probably require treadmilling. The polypeptide is Phage tubulin-like protein (Pseudomonas phage phiKZ).